A 330-amino-acid polypeptide reads, in one-letter code: MIPLLYFVLPTLGSYVMLSIFFLRRPHLLHTPRAPVFPIRLAAHRGGSGERLENTMEAVENSMAQRADLLEFDCQLTRDGVVVVSHDKNLSRQSGLNKDVNTLDFEELPLYKEELEIYFSPGHFAHGSDRHMISLEDVFQKFPRTPMCLEVKERNEELIHKVANLTRRFDRNEITIWAAEKSSVMKRCRAANPEMPMAFTIWRSFWILLLYYLGLLPFVSIPEKFFFCFLPTIINRTYFPFRCGWMNQLSATITKWIIMRKSLIRHLQDRGVQVLFWCLNEESDFEVAFSLGANGVMTDYPTALRHYLDKQEEETQPPQPEALSCLSLKK.

Residue M1 is a topological domain, cytoplasmic. Residues I2 to F22 traverse the membrane as a helical segment. Topologically, residues L23 to T200 are extracellular. In terms of domain architecture, GP-PDE spans I39–L308. 3 residues coordinate a divalent metal cation: E71, D73, and H86. The helical transmembrane segment at I201–I221 threads the bilayer. Over P222–K330 the chain is Cytoplasmic. Residues Q311–K330 are disordered.

Belongs to the glycerophosphoryl diester phosphodiesterase family. Highly expressed in stomach and kidney. In stomach detected in the glandular epithelium. Predominantly expressed in the stomach (at protein level).

Its subcellular location is the membrane. The protein resides in the cytoplasm. It localises to the perinuclear region. It is found in the endoplasmic reticulum membrane. The catalysed reaction is 1-hexadecanoyl-sn-glycero-3-phosphocholine + H2O = 1-hexadecanoyl-sn-glycero-3-phosphate + choline + H(+). The enzyme catalyses 1-O-hexadecyl-sn-glycero-3-phosphocholine + H2O = 1-O-hexadecyl-sn-glycero-3-phosphate + choline + H(+). It carries out the reaction 1-O-(1Z-octadecenyl)-sn-glycero-3-phospho-N-hexadecanoyl-ethanolamine + H2O = 1-O-(1Z-octadecenyl)-sn-glycero-3-phosphate + N-hexadecanoylethanolamine + H(+). It catalyses the reaction N-(5Z,8Z,11Z,14Z-eicosatetraenoyl)-1-(9Z-octadecenoyl)-sn-glycero-3-phosphoethanolamine + H2O = N-(5Z,8Z,11Z,14Z-eicosatetraenoyl)-ethanolamine + 1-(9Z-octadecenoyl)-sn-glycero-3-phosphate + H(+). The catalysed reaction is N,1-di-(9Z-octadecenoyl)-sn-glycero-3-phosphoethanolamine + H2O = N-(9Z-octadecenoyl) ethanolamine + 1-(9Z-octadecenoyl)-sn-glycero-3-phosphate + H(+). The enzyme catalyses N-hexadecanoyl-1-(9Z-octadecenoyl)-sn-glycero-3-phosphoethanolamine + H2O = N-hexadecanoylethanolamine + 1-(9Z-octadecenoyl)-sn-glycero-3-phosphate + H(+). It carries out the reaction 1-hexadecanoyl-sn-glycero-3-phosphocholine + H2O = sn-glycerol 3-phosphocholine + hexadecanoate + H(+). Lysophospholipase D activity is stimulated by calcium. Loss of lysophospholipase D activity in presence of EDTA. Its function is as follows. Hydrolyzes lysoglycerophospholipids to produce lysophosphatidic acid (LPA) and the corresponding amines. Shows a preference for 1-O-alkyl-sn-glycero-3-phosphocholine (lyso-PAF), lysophosphatidylcholine (lyso-PC) and N-acylethanolamine lysophospholipids. Does not display glycerophosphodiester phosphodiesterase activity, since it cannot hydrolyze either glycerophosphoinositol or glycerophosphocholine. This is Lysophospholipase D GDPD3 from Mus musculus (Mouse).